The following is a 235-amino-acid chain: RNA polymerase sigma-E factor (235 aa).

Positions 82 to 95 match the Polymerase core binding motif; the sequence is DLISVGTIGLIKAV. Residues 202 to 221 constitute a DNA-binding region (H-T-H motif); it reads QKEVADMLGISQSYISRLEK.

This sequence belongs to the sigma-70 factor family.

Sigma factors are initiation factors that promote the attachment of RNA polymerase to specific initiation sites and are then released. This sigma factor is responsible for the expression of sporulation specific genes. The sequence is that of RNA polymerase sigma-E factor (sigE) from Clostridium acetobutylicum (strain ATCC 824 / DSM 792 / JCM 1419 / IAM 19013 / LMG 5710 / NBRC 13948 / NRRL B-527 / VKM B-1787 / 2291 / W).